We begin with the raw amino-acid sequence, 126 residues long: Small ribosomal subunit protein uS13 (126 aa).

The tract at residues 94–126 (RGLPVHGQRTSTNARTRKGPRRAIAGKKKPGKK) is disordered. Over residues 108-126 (RTRKGPRRAIAGKKKPGKK) the composition is skewed to basic residues.

Belongs to the universal ribosomal protein uS13 family. As to quaternary structure, part of the 30S ribosomal subunit. Forms a loose heterodimer with protein S19. Forms two bridges to the 50S subunit in the 70S ribosome.

Its function is as follows. Located at the top of the head of the 30S subunit, it contacts several helices of the 16S rRNA. In the 70S ribosome it contacts the 23S rRNA (bridge B1a) and protein L5 of the 50S subunit (bridge B1b), connecting the 2 subunits; these bridges are implicated in subunit movement. Contacts the tRNAs in the A and P-sites. The chain is Small ribosomal subunit protein uS13 from Streptomyces griseus subsp. griseus (strain JCM 4626 / CBS 651.72 / NBRC 13350 / KCC S-0626 / ISP 5235).